Reading from the N-terminus, the 400-residue chain is Argininosuccinate synthase (400 aa).

Residues 11–19 (AYSGGLDTS) and Ala-38 contribute to the ATP site. Tyr-89 and Ser-94 together coordinate L-citrulline. Gly-119 provides a ligand contact to ATP. The L-aspartate site is built by Thr-121, Asn-125, and Asp-126. Residue Asn-125 participates in L-citrulline binding. Arg-129, Ser-178, Ser-187, Glu-263, and Tyr-275 together coordinate L-citrulline.

Belongs to the argininosuccinate synthase family. Type 1 subfamily. As to quaternary structure, homotetramer.

It localises to the cytoplasm. It catalyses the reaction L-citrulline + L-aspartate + ATP = 2-(N(omega)-L-arginino)succinate + AMP + diphosphate + H(+). It participates in amino-acid biosynthesis; L-arginine biosynthesis; L-arginine from L-ornithine and carbamoyl phosphate: step 2/3. The protein is Argininosuccinate synthase of Desulfatibacillum aliphaticivorans.